Consider the following 538-residue polypeptide: MKIYLRFVWILIIILNFLLNLFITTNGVIIVNAFKKSLIVAASFASLSLFNSATAELVYKPLEQPVEPAKPDLKIESVNEKFAEKYPNQYNSWRSTANGDGENIIYADEENPRLIVLWGGYAFAKEYNAPRGHFYAVTDVRNILRTGAPKTANDGPQAMACWTCKGPDVPRLIAEWGEKDYFNAKWAKGGPEIVNSIGCADCHDTTSKDFAEGKPALRIARPHVLRALDALEKATAEKDKAEGRPHNNLSFNTAARTEKRAEICANCHVEYYFAGDIKQVTFPWDNGQTADDIEKYYDDIGFTDWTHSLSKAPMLKAQHPDFEIWSLGMHGKNGVTCVDCHMPKVQGADGKVYTDHQIQNPFDAFDHTCANCHDQSKEKLRDIVTSRKKEVKDVMGRLEDQVVKSHFEAKAAWDAGATKEEMEAALMDIRHAQWRWDYTAASHGGHMHAPEVVLRVLASGLDKVADARTKLAVILTKHGVKTPVQIPDISTADKAWKVMGIDIEKERKAKEEFLKTVVPQWEQQAREKGLLVDPPAQK.

Positions 1–55 (MKIYLRFVWILIIILNFLLNLFITTNGVIIVNAFKKSLIVAASFASLSLFNSATA) are cleaved as a signal peptide. Residue His-133 coordinates heme c. Cys-161, Cys-164, and Lys-165 together coordinate heme. Residues Cys-199, Cys-202, His-203, Cys-264, Cys-267, and His-268 each coordinate heme c. Ca(2+) contacts are provided by Glu-270, Tyr-271, Lys-316, and Gln-318. Substrate is bound at residue Tyr-271. His-319 is a binding site for substrate. Heme c contacts are provided by His-330, Cys-337, Cys-340, His-341, His-356, Cys-369, Cys-372, His-373, and His-448.

This sequence belongs to the cytochrome c-552 family. Requires Ca(2+) as cofactor. Heme c is required as a cofactor.

The protein resides in the periplasm. It catalyses the reaction 6 Fe(III)-[cytochrome c] + NH4(+) + 2 H2O = 6 Fe(II)-[cytochrome c] + nitrite + 8 H(+). It functions in the pathway nitrogen metabolism; nitrate reduction (assimilation). Its function is as follows. Catalyzes the reduction of nitrite to ammonia, consuming six electrons in the process. The sequence is that of Cytochrome c-552 from Haemophilus influenzae (strain 86-028NP).